The primary structure comprises 859 residues: Homeobox-leucine zipper protein HOX32 (859 aa).

The disordered stretch occupies residues Ala-7 to Gly-31. Positions Asp-29–Lys-92 form a DNA-binding region, homeobox. A coiled-coil region spans residues Val-100 to Asn-129. Positions Thr-146–Ala-164 are enriched in polar residues. The tract at residues Thr-146–Ala-172 is disordered. Residues Asp-171–Glu-393 enclose the START domain.

Belongs to the HD-ZIP homeobox family. Class III subfamily. As to expression, expressed in seedlings, roots, stems, leaf sheaths and blades and panicles.

It is found in the nucleus. In terms of biological role, probable transcription factor. This Oryza sativa subsp. japonica (Rice) protein is Homeobox-leucine zipper protein HOX32 (HOX32).